Here is a 505-residue protein sequence, read N- to C-terminus: uncharacterized protein (505 aa).

The Proton acceptor role is filled by His431.

The protein belongs to the GMC oxidoreductase family. It depends on FAD as a cofactor.

This is an uncharacterized protein from Sinorhizobium fredii (strain NBRC 101917 / NGR234).